A 581-amino-acid polypeptide reads, in one-letter code: Frizzled-10 (581 aa).

A signal peptide spans 1-20; sequence MQRPGPRLWLVLQVMGSCAA. The Extracellular portion of the chain corresponds to 21 to 225; it reads ISSMDMERPG…DVYWSREDKR (205 aa). In terms of domain architecture, FZ spans 29–150; the sequence is PGDGKCQPIE…NDPNYLCMEA (122 aa). 5 disulfides stabilise this stretch: cysteine 34–cysteine 95, cysteine 42–cysteine 88, cysteine 79–cysteine 117, cysteine 106–cysteine 147, and cysteine 110–cysteine 134. Asparagine 48 is a glycosylation site (N-linked (GlcNAc...) asparagine). N-linked (GlcNAc...) asparagine glycosylation is present at asparagine 153. Residues 226–246 form a helical membrane-spanning segment; sequence FAVVWLAIWAVLCFFSSAFTV. Over 247–262 the chain is Cytoplasmic; that stretch reads LTFLIDPARFRYPERP. A helical membrane pass occupies residues 263 to 283; it reads IIFLSMCYCVYSVGYLIRLFA. Over 284 to 311 the chain is Extracellular; it reads GAESIACDRDSGQLYVIQEGLESTGCTL. The chain crosses the membrane as a helical span at residues 312 to 332; sequence VFLVLYYFGMASSLWWVVLTL. The Cytoplasmic segment spans residues 333-351; that stretch reads TWFLAAGKKWGHEAIEANS. A helical membrane pass occupies residues 352-372; the sequence is SYFHLAAWAIPAVKTILILVM. The Extracellular portion of the chain corresponds to 373–393; that stretch reads RRVAGDELTGVCYVGSMDVNA. A helical transmembrane segment spans residues 394-414; sequence LTGFVLIPLACYLVIGTSFIL. The Cytoplasmic portion of the chain corresponds to 415–443; the sequence is SGFVALFHIRRVMKTGGENTDKLEKLMVR. The helical transmembrane segment at 444-464 threads the bilayer; it reads IGLFSVLYTVPATCVIACYFY. Residues 465 to 502 lie on the Extracellular side of the membrane; it reads ERLNMDYWKILAAQHKCKMNNQTKTLDCLMAASIPAVE. An N-linked (GlcNAc...) asparagine glycan is attached at asparagine 485. Residues 503–523 form a helical membrane-spanning segment; that stretch reads IFMVKIFMLLVVGITSGMWIW. Residues 524-581 lie on the Cytoplasmic side of the membrane; that stretch reads TSKTLQSWQQVCSRRLKKKSRRKPASVITSGGIYKKAQHPQKTHHGKYEIPAQSPTCV. Residues 526–531 carry the Lys-Thr-X-X-X-Trp motif, mediates interaction with the PDZ domain of Dvl family members motif; that stretch reads KTLQSW. Residues 560 to 581 form a disordered region; sequence AQHPQKTHHGKYEIPAQSPTCV. The PDZ-binding motif lies at 579–581; the sequence is TCV.

Belongs to the G-protein coupled receptor Fz/Smo family. As to quaternary structure, interacts with WNT7B. Interacts with MYOC. Ubiquitinated by ZNRF3, leading to its degradation by the proteasome. In terms of tissue distribution, highest levels in the placenta and fetal kidney, followed by fetal lung and brain. In adult brain, abundantly expressed in the cerebellum, followed by cerebral cortex, medulla and spinal cord; very low levels in total brain, frontal lobe, temporal lobe and putamen. Weak expression detected in adult brain, heart, lung, skeletal muscle, pancreas, spleen and prostate.

The protein resides in the cell membrane. In terms of biological role, receptor for Wnt proteins. Functions in the canonical Wnt/beta-catenin signaling pathway. The canonical Wnt/beta-catenin signaling pathway leads to the activation of disheveled proteins, inhibition of GSK-3 kinase, nuclear accumulation of beta-catenin and activation of Wnt target genes. A second signaling pathway involving PKC and calcium fluxes has been seen for some family members, but it is not yet clear if it represents a distinct pathway or if it can be integrated in the canonical pathway, as PKC seems to be required for Wnt-mediated inactivation of GSK-3 kinase. Both pathways seem to involve interactions with G-proteins. May be involved in transduction and intercellular transmission of polarity information during tissue morphogenesis and/or in differentiated tissues. In Homo sapiens (Human), this protein is Frizzled-10 (FZD10).